The sequence spans 203 residues: Thymidylate kinase (203 aa).

9–16 (GPEGSGKT) serves as a coordination point for ATP.

Belongs to the thymidylate kinase family.

The catalysed reaction is dTMP + ATP = dTDP + ADP. Functionally, phosphorylation of dTMP to form dTDP in both de novo and salvage pathways of dTTP synthesis. This chain is Thymidylate kinase, found in Staphylococcus haemolyticus (strain JCSC1435).